A 131-amino-acid polypeptide reads, in one-letter code: Small ribosomal subunit protein uS9 (131 aa).

This sequence belongs to the universal ribosomal protein uS9 family.

This is Small ribosomal subunit protein uS9 from Actinobacillus pleuropneumoniae serotype 5b (strain L20).